We begin with the raw amino-acid sequence, 535 residues long: Suppressor of cytokine signaling 6 (535 aa).

A compositionally biased stretch (basic residues) spans 80–89; it reads RLSAKQKSKG. Residues 80–105 form a disordered region; sequence RLSAKQKSKGKAGTPSGSSADEDTFS. An SH2 domain is found at 384–491; sequence WYWGPITRWE…TYPVRLTNPV (108 aa). In terms of domain architecture, SOCS box spans 486-535; the sequence is RLTNPVSRFMQVRSLQYLCRFVIRQYTRIDLIQKLPLPNKMKDYLQEKHY.

As to quaternary structure, interacts with RBCK1. Interacts with phosphorylated IRS4. Interacts with PIM3. Interacts with KIT (phosphorylated).

The protein operates within protein modification; protein ubiquitination. In terms of biological role, SOCS family proteins form part of a classical negative feedback system that regulates cytokine signal transduction. May be a substrate recognition component of a SCF-like ECS (Elongin BC-CUL2/5-SOCS-box protein) E3 ubiquitin-protein ligase complex which mediates the ubiquitination and subsequent proteasomal degradation of target proteins. Regulates KIT degradation by ubiquitination of the tyrosine-phosphorylated receptor. This Homo sapiens (Human) protein is Suppressor of cytokine signaling 6 (SOCS6).